Consider the following 179-residue polypeptide: Large ribosomal subunit protein uL5 (179 aa).

This sequence belongs to the universal ribosomal protein uL5 family. In terms of assembly, part of the 50S ribosomal subunit; part of the 5S rRNA/L5/L18/L25 subcomplex. Contacts the 5S rRNA and the P site tRNA. Forms a bridge to the 30S subunit in the 70S ribosome.

Functionally, this is one of the proteins that bind and probably mediate the attachment of the 5S RNA into the large ribosomal subunit, where it forms part of the central protuberance. In the 70S ribosome it contacts protein S13 of the 30S subunit (bridge B1b), connecting the 2 subunits; this bridge is implicated in subunit movement. Contacts the P site tRNA; the 5S rRNA and some of its associated proteins might help stabilize positioning of ribosome-bound tRNAs. The chain is Large ribosomal subunit protein uL5 from Bdellovibrio bacteriovorus (strain ATCC 15356 / DSM 50701 / NCIMB 9529 / HD100).